We begin with the raw amino-acid sequence, 276 residues long: Ribosomal RNA small subunit methyltransferase A (276 aa).

S-adenosyl-L-methionine is bound by residues His15, Leu17, Gly42, Glu64, Asp89, and Asn108.

It belongs to the class I-like SAM-binding methyltransferase superfamily. rRNA adenine N(6)-methyltransferase family. RsmA subfamily.

The protein resides in the cytoplasm. It carries out the reaction adenosine(1518)/adenosine(1519) in 16S rRNA + 4 S-adenosyl-L-methionine = N(6)-dimethyladenosine(1518)/N(6)-dimethyladenosine(1519) in 16S rRNA + 4 S-adenosyl-L-homocysteine + 4 H(+). Its function is as follows. Specifically dimethylates two adjacent adenosines (A1518 and A1519) in the loop of a conserved hairpin near the 3'-end of 16S rRNA in the 30S particle. May play a critical role in biogenesis of 30S subunits. This chain is Ribosomal RNA small subunit methyltransferase A, found in Prochlorococcus marinus (strain MIT 9312).